The following is a 421-amino-acid chain: Tyrosine--tRNA ligase 1 (421 aa).

Residue tyrosine 35 coordinates L-tyrosine. The 'HIGH' region signature appears at proline 40 to histidine 49. L-tyrosine contacts are provided by tyrosine 170 and glutamine 174. The 'KMSKS' region signature appears at lysine 231 to threonine 235. Lysine 234 serves as a coordination point for ATP. Positions leucine 354–tyrosine 420 constitute an S4 RNA-binding domain.

The protein belongs to the class-I aminoacyl-tRNA synthetase family. TyrS type 1 subfamily. As to quaternary structure, homodimer.

The protein resides in the cytoplasm. The enzyme catalyses tRNA(Tyr) + L-tyrosine + ATP = L-tyrosyl-tRNA(Tyr) + AMP + diphosphate + H(+). Catalyzes the attachment of tyrosine to tRNA(Tyr) in a two-step reaction: tyrosine is first activated by ATP to form Tyr-AMP and then transferred to the acceptor end of tRNA(Tyr). The sequence is that of Tyrosine--tRNA ligase 1 from Bacillus licheniformis (strain ATCC 14580 / DSM 13 / JCM 2505 / CCUG 7422 / NBRC 12200 / NCIMB 9375 / NCTC 10341 / NRRL NRS-1264 / Gibson 46).